Consider the following 123-residue polypeptide: Small ribosomal subunit protein uS12 (123 aa).

3-methylthioaspartic acid is present on Asp89. The disordered stretch occupies residues 102-123; sequence LDTQGVKDRKQGRSKYGAKRPK. The segment covering 113–123 has biased composition (basic residues); sequence GRSKYGAKRPK.

The protein belongs to the universal ribosomal protein uS12 family. As to quaternary structure, part of the 30S ribosomal subunit. Contacts proteins S8 and S17. May interact with IF1 in the 30S initiation complex.

With S4 and S5 plays an important role in translational accuracy. Its function is as follows. Interacts with and stabilizes bases of the 16S rRNA that are involved in tRNA selection in the A site and with the mRNA backbone. Located at the interface of the 30S and 50S subunits, it traverses the body of the 30S subunit contacting proteins on the other side and probably holding the rRNA structure together. The combined cluster of proteins S8, S12 and S17 appears to hold together the shoulder and platform of the 30S subunit. The chain is Small ribosomal subunit protein uS12 from Magnetococcus marinus (strain ATCC BAA-1437 / JCM 17883 / MC-1).